A 123-amino-acid chain; its full sequence is MKDNNIKLSLLMKSVEQPLMKTELPEIKVGDTIRLGLLVKEGSKTREQLCEGVVLSRKKRKSLNTSLTLRCSFQGVGVERVFFLNSPRVTFVKVIRRAKVRRAKLYYLRDLLGKASRLKQIFN.

Belongs to the bacterial ribosomal protein bL19 family.

It is found in the plastid. The protein localises to the chloroplast. This is Large ribosomal subunit protein bL19c (rpl19) from Porphyra purpurea (Red seaweed).